The following is a 196-amino-acid chain: Large ribosomal subunit protein bL20 (196 aa).

Belongs to the bacterial ribosomal protein bL20 family.

Functionally, binds directly to 23S ribosomal RNA and is necessary for the in vitro assembly process of the 50S ribosomal subunit. It is not involved in the protein synthesizing functions of that subunit. This is Large ribosomal subunit protein bL20 (rplT) from Oenococcus oeni (strain ATCC BAA-331 / PSU-1).